A 185-amino-acid chain; its full sequence is Probable RNA 2'-phosphotransferase (185 aa).

This sequence belongs to the KptA/TPT1 family.

Its function is as follows. Removes the 2'-phosphate from RNA via an intermediate in which the phosphate is ADP-ribosylated by NAD followed by a presumed transesterification to release the RNA and generate ADP-ribose 1''-2''-cyclic phosphate (APPR&gt;P). May function as an ADP-ribosylase. This chain is Probable RNA 2'-phosphotransferase, found in Bacillus thuringiensis subsp. konkukian (strain 97-27).